The chain runs to 388 residues: Carbohydrate sulfotransferase 4 (388 aa).

The Cytoplasmic segment spans residues 1 to 7 (MMLLKKG). Residues 8–28 (RLLMFLGSQVIVVALFIHMSV) traverse the membrane as a helical; Signal-anchor for type II membrane protein segment. The Lumenal portion of the chain corresponds to 29–388 (HRHLSQREES…HILGQVFREG (360 aa)). Residues 50-56 (WRSGSSF) and 204-212 (RDPRAVFRS) contribute to the 3'-phosphoadenylyl sulfate site. N-linked (GlcNAc...) asparagine glycosylation is found at Asn-307, Asn-328, and Asn-369.

It belongs to the sulfotransferase 1 family. Gal/GlcNAc/GalNAc subfamily. In terms of assembly, monomer. As to expression, specifically expressed in high endothelial venules (HEV) of peripheral lymph nodes.

Its subcellular location is the golgi apparatus membrane. It catalyses the reaction 3-O-{N-acetyl-beta-D-glucosaminyl-(1-&gt;3)-beta-D-galactosyl-(1-&gt;3)-N-acetyl-alpha-D-galactosaminyl}-L-threonyl-[protein] + 3'-phosphoadenylyl sulfate = 3-O-{6-O-sulfo-N-acetyl-beta-D-glucosaminyl-(1-&gt;3)-beta-D-galactosyl-(1-&gt;3)-N-acetyl-alpha-D-galactosaminyl}-L-threonyl-[protein] + adenosine 3',5'-bisphosphate + H(+). The catalysed reaction is 3-O-{N-acetyl-beta-D-glucosaminyl-(1-&gt;3)-beta-D-galactosyl-(1-&gt;3)-N-acetyl-alpha-D-galactosaminyl}-L-seryl-[protein] + 3'-phosphoadenylyl sulfate = 3-O-{6-O-sulfo-N-acetyl-beta-D-glucosaminyl-(1-&gt;3)-beta-D-galactosyl-(1-&gt;3)-N-acetyl-alpha-D-galactosaminyl}-L-seryl-[protein] + adenosine 3',5'-bisphosphate + H(+). The enzyme catalyses a 3-O-{beta-D-galactosyl-(1-&gt;3)-[N-acetyl-beta-D-glucosaminyl-(1-&gt;6)]-N-acetyl-alpha-D-galactosaminyl}-L-threonyl-[protein] + 3'-phosphoadenylyl sulfate = 3-O-{beta-D-galactosyl-(1-&gt;3)-[6-O-sulfo-N-acetyl-beta-D-glucosaminyl-(1-&gt;6)]-N-acetyl-alpha-D-galactosaminyl}-L-threonyl-[protein] + adenosine 3',5'-bisphosphate + H(+). It carries out the reaction 3-O-{beta-D-galactosyl-(1-&gt;3)-[N-acetyl-beta-D-glucosaminyl-(1-&gt;6)]-N-acetyl-alpha-D-galactosaminyl}-L-seryl-[protein] + 3'-phosphoadenylyl sulfate = 3-O-{beta-D-galactosyl-(1-&gt;3)-[6-O-sulfo-N-acetyl-beta-D-glucosaminyl-(1-&gt;6)]-N-acetyl-alpha-D-galactosaminyl}-L-seryl-[protein] + adenosine 3',5'-bisphosphate + H(+). Its pathway is protein modification; carbohydrate sulfation. In terms of biological role, sulfotransferase involved in SELL/L-selectin ligand biosynthesis pathway. Catalyzes the transfer of the sulfate group from 3'-phospho-5'-adenylyl sulfate (PAPS) onto the hydroxyl group at C-6 position of the non-reducing N-acetylglucosamine (GlcNAc) residue within O-linked mucin-type glycans. Contributes to generate sialyl 6-sulfo Lewis X determinant (also known as MECA-79 epitope) for SELL recognition, a prerequisite for continuous lymphocyte homing into peripheral lymph nodes and antigen immune surveillance. Transfers the sulfate group primarily on core 2 GlcNAcbeta1-6(Galbeta1-3)GalNAcalphaSer/Thr and extended core 1 GlcNAcbeta1-3Galbeta1-3GalNAcalphaSer/Thr based O-linked glycans on CD34 and GLYCAM1 peripheral node addressins (PNAds) expressed on the lumenal side of high endothelial venules (HEVs). The recognition of PNAds by SELL initiates a multistep process comprising tethering and rolling of blood lymphocytes on HEVs against the blood flow, followed by chemokine signaling, integrin-mediated lymphocyte adhesion onto endothelial cells and lymphocyte transendothelial migration. Modulates rolling velocity and differential T and B lymphocyte recruitment into peripheral lymph nodes, with a major role in B lymphocyte homing. Might be redundant in sulfation of MADCAM1 and lymphocyte trafficking to mesenteric lymph nodes. Can also sulfonate core 3 GlcNAcbeta1-3GalNAc-R based glycans as well as GlcNAcbeta1-3Galbeta1-Glc, GlcNAcbeta1-6ManOMe and GlcNAcbeta1-2Man oligosaccharides, which might be ectopically expressed during tumorigenesis. The chain is Carbohydrate sulfotransferase 4 (Chst4) from Mus musculus (Mouse).